A 306-amino-acid polypeptide reads, in one-letter code: Protein FdhE homolog (306 aa).

The protein belongs to the FdhE family.

Its subcellular location is the cytoplasm. Its function is as follows. Necessary for formate dehydrogenase activity. The protein is Protein FdhE homolog of Proteus mirabilis (strain HI4320).